Reading from the N-terminus, the 835-residue chain is MGYSESRSESVSSKGKTSYGHELETVPLPEKKIYTTWPDMIRHWPKTTLCIVSNEFCERFSYYGMRTVLTFYLLNVLKFTDSQSTIFFNGFTVLCYTTPLLGSIVADGYIGKFWTIFSVSILYAIGQVVLALASTKNFQSSVHPWMDLSGLLIIAFGTGGIKPCVSAFGGDQFELGQERMLSLFFSMFYFSINAGSMISTFISPIFRSQPCLGQDSCYPMAFGIPAILMIVATLVFMGGSFWYKKNPPKDNVFGEVSRLMFRAVGNKMKSGSTPKEHWLLHYLTTHDCALDAKCLELQAEKRNKNLCQKKKFIDDVRSLLRVLVMFLPVPMFWALYDQQGSVWLIQAIQMDCRLSDTLLLLPDQMQTLNAVLILLFIPLFQVIIYPVAAKCVRLTPLRKMVTGGLLASLAFLITGFVQLQVNTTLPTLPEEGEASISFWNQFETDCTITVMSGIHKRVLPHDKYLHEDKKNKSGIYNLFTTKSPAKGNGDWTLTYDLSYDGACGDTSKLEKTVKVTAKSKKIIYVGVGSFGYYQNTANTDKPTDGTGEFSMGIVTVFNSSYGGNFAMCRQNTSDFDVNHPCNPRHPADFYFWETDYNSHTDDRDQNATITGSLSSQPAVTYKQKSVKPGYWQLYYLLNTPKDVDRQTYNKTATLVAPTNYGFHRVKQGGVFIYALTGTYENPKIHELQIVQSNSVSILWQIPQIVVITAAEILFSITGYEFAYSQSAPSMKALVQALWLLTTAAGDSIIVVITILNLFENMAVEFFVYAAAMFVVIAIFALLSIFYYTYNYYTTDEEDGEIGVDDEEEIEDHNPRYSIDNKGFHPDEKDTFDMHF.

11 helical membrane passes run 86-106 (IFFN…SIVA), 113-133 (FWTI…LALA), 150-170 (GLLI…AFGG), 183-203 (LFFS…TFIS), 222-242 (FGIP…GSFW), 325-345 (MFLP…VWLI), 368-388 (LNAV…YPVA), 401-421 (VTGG…QLQV), 697-717 (ILWQ…FSIT), 738-758 (WLLT…LNLF), and 765-785 (FFVY…LSIF). The segment at 814-835 (PRYSIDNKGFHPDEKDTFDMHF) is disordered. Residues 821–835 (KGFHPDEKDTFDMHF) are compositionally biased toward basic and acidic residues.

Belongs to the major facilitator superfamily. Proton-dependent oligopeptide transporter (POT/PTR) (TC 2.A.17) family. Expressed specifically in the intestine.

The protein localises to the apical cell membrane. Functionally, low-affinity peptide transporter that is necessary for proton-dependent uptake of di- or tripeptides, and to a minor extent tetrapeptides, in the intestine. Transport is independent of sodium and chloride ions. Controls the uptake of dietary fatty acids, plays a role in fatty acid synthesis and is responsible for dipeptide-induced acidification of the intestine. Regulates cellular pH differences together with the antiporter protein, nhx-2. Amino acid uptake and absorption levels influence the insulin signaling/daf-2 and let-363/TOR pathways, subsequently affecting the stress response and longevity of the organism. It is required for the uptake of the L-enantiomers of various amino acids, including L-glutamate. In response to the availability of amino acid nutrients, may play a role in promoting reproduction and fertility. The polypeptide is Peptide transporter family 1 (Caenorhabditis elegans).